Here is a 435-residue protein sequence, read N- to C-terminus: GTPase Obg (435 aa).

The region spanning 1–159 (MAFIDKCKIV…IEVVLELKTI (159 aa)) is the Obg domain. Residues 160 to 329 (ADIGIIGLPN…MLDDVIKIYF (170 aa)) enclose the OBG-type G domain. GTP-binding positions include 166 to 173 (GLPNAGKS), 191 to 195 (FTTLN), 212 to 215 (DIPG), 282 to 285 (NKID), and 310 to 312 (SAL). Mg(2+) is bound by residues S173 and T193. An OCT domain is found at 355–435 (TPKNKELDKT…IYDITLEFEE (81 aa)).

Belongs to the TRAFAC class OBG-HflX-like GTPase superfamily. OBG GTPase family. Monomer. It depends on Mg(2+) as a cofactor.

It localises to the cytoplasm. An essential GTPase which binds GTP, GDP and possibly (p)ppGpp with moderate affinity, with high nucleotide exchange rates and a fairly low GTP hydrolysis rate. Plays a role in control of the cell cycle, stress response, ribosome biogenesis and in those bacteria that undergo differentiation, in morphogenesis control. This is GTPase Obg from Ureaplasma urealyticum serovar 10 (strain ATCC 33699 / Western).